We begin with the raw amino-acid sequence, 269 residues long: RBPJ-interacting and tubulin-associated protein 1 (269 aa).

The Nuclear export signal signature appears at 5 to 17; sequence VELAVSGMQTLGL. Disordered stretches follow at residues 66–105 and 141–269; these read VGKE…PISH and LWTP…PPWK. Positions 80 to 92 are enriched in polar residues; that stretch reads CETTPSRGSTPTL. The Nuclear localization signal motif lies at 92–108; the sequence is LTPRKKNKYRPISHTPS. Residues 128–156 form an interaction with RBPJ/RBPSUH region; sequence RMAKGDAAKLRALLWTPPPTPRGSHSPRP. Residues 156 to 269 are interaction with tubulin; sequence PREAPLRAIH…ATQKPKPPWK (114 aa). Over residues 200-253 the composition is skewed to polar residues; the sequence is HSLTHLNVPSTGHPATSAPHTNGPQDLRPSTSGVTFRSPLVTSRARSVSISVPS.

It belongs to the RITA family. Interacts with RBPJ/RBPSUH.

Its subcellular location is the cytoplasm. The protein localises to the nucleus. It is found in the cytoskeleton. It localises to the microtubule organizing center. The protein resides in the centrosome. Functionally, tubulin-binding protein that acts as a negative regulator of Notch signaling pathway. Shuttles between the cytoplasm and the nucleus and mediates the nuclear export of RBPJ/RBPSUH, thereby preventing the interaction between RBPJ/RBPSUH and NICD product of Notch proteins (Notch intracellular domain), leading to down-regulate Notch-mediated transcription. May play a role in neurogenesis. This Homo sapiens (Human) protein is RBPJ-interacting and tubulin-associated protein 1 (RITA1).